Reading from the N-terminus, the 261-residue chain is Chanoclavine-I dehydrogenase easD (261 aa).

Positions 1–20 are cleaved as a signal peptide; that stretch reads MPSMTSKVFAITGGASGIGA. Position 18 (I18) interacts with NADP(+). N-linked (GlcNAc...) asparagine glycosylation occurs at N43. NADP(+)-binding residues include D66, R132, Y166, K170, and T201. The active-site Proton donor is Y166. The Lowers pKa of active site Tyr role is filled by K170.

Belongs to the short-chain dehydrogenases/reductases (SDR) family. As to quaternary structure, homotetramer.

It carries out the reaction chanoclavine-I + NAD(+) = chanoclavine-I aldehyde + NADH + H(+). It participates in alkaloid biosynthesis; ergot alkaloid biosynthesis. Chanoclavine-I dehydrogenase; part of the gene cluster that mediates the biosynthesis of fungal ergot alkaloid. DmaW catalyzes the first step of ergot alkaloid biosynthesis by condensing dimethylallyl diphosphate (DMAP) and tryptophan to form 4-dimethylallyl-L-tryptophan. The second step is catalyzed by the methyltransferase easF that methylates 4-dimethylallyl-L-tryptophan in the presence of S-adenosyl-L-methionine, resulting in the formation of 4-dimethylallyl-L-abrine. The catalase easC and the FAD-dependent oxidoreductase easE then transform 4-dimethylallyl-L-abrine to chanoclavine-I which is further oxidized by easD in the presence of NAD(+), resulting in the formation of chanoclavine-I aldehyde. Agroclavine dehydrogenase easG then mediates the conversion of chanoclavine-I aldehyde to agroclavine via a non-enzymatic adduct reaction: the substrate is an iminium intermediate that is formed spontaneously from chanoclavine-I aldehyde in the presence of glutathione. The presence of easA is not required to complete this reaction. Further conversion of agroclavine to paspalic acid is a two-step process involving oxidation of agroclavine to elymoclavine and of elymoclavine to paspalic acid, the second step being performed by the elymoclavine oxidase cloA. Paspalic acid is then further converted to D-lysergic acid. Ergopeptines are assembled from D-lysergic acid and three different amino acids by the D-lysergyl-peptide-synthetases composed each of a monomudular and a trimodular nonribosomal peptide synthetase subunit. LpsB and lpsC encode the monomodular subunits responsible for D-lysergic acid activation and incorporation into the ergopeptine backbone. LpsA1 and A2 subunits encode the trimodular nonribosomal peptide synthetase assembling the tripeptide portion of ergopeptines. LpsA1 is responsible for formation of the major ergopeptine, ergotamine, and lpsA2 for alpha-ergocryptine, the minor ergopeptine of the total alkaloid mixture elaborated by C.purpurea. D-lysergyl-tripeptides are assembled by the nonribosomal peptide synthetases and released as N-(D-lysergyl-aminoacyl)-lactams. Cyclolization of the D-lysergyl-tripeptides is performed by the Fe(2+)/2-ketoglutarate-dependent dioxygenase easH which introduces a hydroxyl group into N-(D-lysergyl-aminoacyl)-lactam at alpha-C of the aminoacyl residue followed by spontaneous condensation with the terminal lactam carbonyl group. The chain is Chanoclavine-I dehydrogenase easD from Claviceps purpurea (strain 20.1) (Ergot fungus).